Consider the following 360-residue polypeptide: Aminomethyltransferase (360 aa).

Belongs to the GcvT family. In terms of assembly, the glycine cleavage system is composed of four proteins: P, T, L and H.

It catalyses the reaction N(6)-[(R)-S(8)-aminomethyldihydrolipoyl]-L-lysyl-[protein] + (6S)-5,6,7,8-tetrahydrofolate = N(6)-[(R)-dihydrolipoyl]-L-lysyl-[protein] + (6R)-5,10-methylene-5,6,7,8-tetrahydrofolate + NH4(+). The glycine cleavage system catalyzes the degradation of glycine. This is Aminomethyltransferase from Legionella pneumophila subsp. pneumophila (strain Philadelphia 1 / ATCC 33152 / DSM 7513).